The sequence spans 295 residues: UDP-N-acetylenolpyruvoylglucosamine reductase (295 aa).

An FAD-binding PCMH-type domain is found at 25-189 (RVGGPADLFA…LEALFRLDQR (165 aa)). The active site involves Arg169. The active-site Proton donor is Ser218. Glu288 is an active-site residue.

Belongs to the MurB family. FAD is required as a cofactor.

The protein localises to the cytoplasm. The enzyme catalyses UDP-N-acetyl-alpha-D-muramate + NADP(+) = UDP-N-acetyl-3-O-(1-carboxyvinyl)-alpha-D-glucosamine + NADPH + H(+). The protein operates within cell wall biogenesis; peptidoglycan biosynthesis. Functionally, cell wall formation. The sequence is that of UDP-N-acetylenolpyruvoylglucosamine reductase from Pelobacter propionicus (strain DSM 2379 / NBRC 103807 / OttBd1).